A 495-amino-acid chain; its full sequence is UDP-N-acetylmuramoyl-L-alanyl-D-glutamate--2,6-diaminopimelate ligase (495 aa).

Residue Ser-29 coordinates UDP-N-acetyl-alpha-D-muramoyl-L-alanyl-D-glutamate. 111–117 (GTNGKTS) contributes to the ATP binding site. UDP-N-acetyl-alpha-D-muramoyl-L-alanyl-D-glutamate is bound by residues 153–154 (TT), Ser-180, Gln-186, and Arg-188. Lys-220 carries the post-translational modification N6-carboxylysine. Meso-2,6-diaminopimelate-binding positions include Arg-384, 408-411 (DNPR), Gly-459, and Glu-463. The short motif at 408–411 (DNPR) is the Meso-diaminopimelate recognition motif element.

Belongs to the MurCDEF family. MurE subfamily. Requires Mg(2+) as cofactor. Post-translationally, carboxylation is probably crucial for Mg(2+) binding and, consequently, for the gamma-phosphate positioning of ATP.

It is found in the cytoplasm. It catalyses the reaction UDP-N-acetyl-alpha-D-muramoyl-L-alanyl-D-glutamate + meso-2,6-diaminopimelate + ATP = UDP-N-acetyl-alpha-D-muramoyl-L-alanyl-gamma-D-glutamyl-meso-2,6-diaminopimelate + ADP + phosphate + H(+). The protein operates within cell wall biogenesis; peptidoglycan biosynthesis. In terms of biological role, catalyzes the addition of meso-diaminopimelic acid to the nucleotide precursor UDP-N-acetylmuramoyl-L-alanyl-D-glutamate (UMAG) in the biosynthesis of bacterial cell-wall peptidoglycan. The polypeptide is UDP-N-acetylmuramoyl-L-alanyl-D-glutamate--2,6-diaminopimelate ligase (Xylella fastidiosa (strain 9a5c)).